We begin with the raw amino-acid sequence, 250 residues long: Putative inactive flavonol synthase 2 (250 aa).

Residues Thr-171–Ala-250 enclose the Fe2OG dioxygenase domain. Residues His-195 and Asp-197 each coordinate Fe cation.

It belongs to the iron/ascorbate-dependent oxidoreductase family.

The chain is Putative inactive flavonol synthase 2 (FLS2) from Arabidopsis thaliana (Mouse-ear cress).